Here is a 236-residue protein sequence, read N- to C-terminus: Leucyl/phenylalanyl-tRNA--protein transferase (236 aa).

This sequence belongs to the L/F-transferase family.

The protein localises to the cytoplasm. The enzyme catalyses N-terminal L-lysyl-[protein] + L-leucyl-tRNA(Leu) = N-terminal L-leucyl-L-lysyl-[protein] + tRNA(Leu) + H(+). The catalysed reaction is N-terminal L-arginyl-[protein] + L-leucyl-tRNA(Leu) = N-terminal L-leucyl-L-arginyl-[protein] + tRNA(Leu) + H(+). It catalyses the reaction L-phenylalanyl-tRNA(Phe) + an N-terminal L-alpha-aminoacyl-[protein] = an N-terminal L-phenylalanyl-L-alpha-aminoacyl-[protein] + tRNA(Phe). In terms of biological role, functions in the N-end rule pathway of protein degradation where it conjugates Leu, Phe and, less efficiently, Met from aminoacyl-tRNAs to the N-termini of proteins containing an N-terminal arginine or lysine. The sequence is that of Leucyl/phenylalanyl-tRNA--protein transferase from Idiomarina loihiensis (strain ATCC BAA-735 / DSM 15497 / L2-TR).